Consider the following 1962-residue polypeptide: Myosin heavy chain, muscle (1962 aa).

The Myosin N-terminal SH3-like domain occupies 33–82 (DSKKSCWIPDEKEGYLLGEIKATKGDIVSVGLQGGEVRDIKSEKVEKVNP). In terms of domain architecture, Myosin motor spans 86-777 (EKIEDMADMT…VLGQMEEFRD (692 aa)). 179 to 186 (GESGAGKT) lines the ATP pocket. Residues 656–678 (LNSLMTTLRSTQPHFVRCIIPNE) form an actin-binding region. The region spanning 780 to 809 (LGKIMSWMQAWARGYLSRKGFKKLQEQRVA) is the IQ domain. Positions 802 to 1927 (KLQEQRVALK…KFRAKGRAGS (1126 aa)) form a coiled coil. Disordered regions lie at residues 1822–1862 (ENEL…NHER) and 1922–1962 (KGRA…ENEF).

The protein belongs to the TRAFAC class myosin-kinesin ATPase superfamily. Myosin family. In terms of assembly, muscle myosin is a hexameric protein that consists of 2 heavy chain subunits (MHC), 2 alkali light chain subunits (MLC) and 2 regulatory light chain subunits (MLC-2). Expressed in larval and adult muscles. Isoforms containing exon 9a are expressed in indirect flight muscles, exons 9a and 9b are expressed in jump muscles, exons 9b and 9c are expressed in other larval and adult muscles.

It localises to the cytoplasm. The protein resides in the myofibril. Muscle contraction. The chain is Myosin heavy chain, muscle (Mhc) from Drosophila melanogaster (Fruit fly).